We begin with the raw amino-acid sequence, 275 residues long: Anamorsin homolog (275 aa).

The tract at residues 1 to 147 is N-terminal SAM-like domain; that stretch reads MTSASIHIGS…QSASSAAATG (147 aa). The linker stretch occupies residues 148-183; it reads RINLGGAKTKVKLSLDDDDDDQLIDEDDLLNGGGGM. The [2Fe-2S] cluster site is built by cysteine 203, cysteine 209, cysteine 212, and cysteine 214. A fe-S binding site A region spans residues 203-214; the sequence is CGGRKACDNCTC. Positions 238, 241, 249, and 252 each coordinate [4Fe-4S] cluster. 2 consecutive short sequence motifs (cx2C motif) follow at residues 238–241 and 249–252; these read CGNC and CAGC. A fe-S binding site B region spans residues 238–252; sequence CGNCAKGDAFRCAGC.

This sequence belongs to the anamorsin family. As to quaternary structure, monomer. It depends on [2Fe-2S] cluster as a cofactor. The cofactor is [4Fe-4S] cluster.

The protein resides in the cytoplasm. It is found in the mitochondrion intermembrane space. Component of the cytosolic iron-sulfur (Fe-S) protein assembly (CIA) machinery. Required for the maturation of extramitochondrial Fe-S proteins. Part of an electron transfer chain functioning in an early step of cytosolic Fe-S biogenesis, facilitating the de novo assembly of a [4Fe-4S] cluster on the cytosolic Fe-S scaffold complex. Electrons are transferred from NADPH via a FAD- and FMN-containing diflavin oxidoreductase. Together with the diflavin oxidoreductase, also required for the assembly of the diferric tyrosyl radical cofactor of ribonucleotide reductase (RNR), probably by providing electrons for reduction during radical cofactor maturation in the catalytic small subunit. The protein is Anamorsin homolog of Thalassiosira pseudonana (Marine diatom).